The sequence spans 322 residues: Replication factor C small subunit 2 (322 aa).

ATP is bound at residue G44–T51.

Belongs to the activator 1 small subunits family. RfcS subfamily. Heteromultimer composed of small subunits (RfcS) and large subunits (RfcL).

Its function is as follows. Part of the RFC clamp loader complex which loads the PCNA sliding clamp onto DNA. The sequence is that of Replication factor C small subunit 2 from Pyrobaculum arsenaticum (strain DSM 13514 / JCM 11321 / PZ6).